The following is a 306-amino-acid chain: tRNA-cytidine(32) 2-sulfurtransferase (306 aa).

Positions 44–49 match the PP-loop motif motif; sequence SGGKDS. Residues C119, C122, and C210 each coordinate [4Fe-4S] cluster.

This sequence belongs to the TtcA family. Homodimer. Requires Mg(2+) as cofactor. It depends on [4Fe-4S] cluster as a cofactor.

It is found in the cytoplasm. The enzyme catalyses cytidine(32) in tRNA + S-sulfanyl-L-cysteinyl-[cysteine desulfurase] + AH2 + ATP = 2-thiocytidine(32) in tRNA + L-cysteinyl-[cysteine desulfurase] + A + AMP + diphosphate + H(+). Its pathway is tRNA modification. Functionally, catalyzes the ATP-dependent 2-thiolation of cytidine in position 32 of tRNA, to form 2-thiocytidine (s(2)C32). The sulfur atoms are provided by the cysteine/cysteine desulfurase (IscS) system. The protein is tRNA-cytidine(32) 2-sulfurtransferase of Photorhabdus laumondii subsp. laumondii (strain DSM 15139 / CIP 105565 / TT01) (Photorhabdus luminescens subsp. laumondii).